The primary structure comprises 308 residues: Ribosomal protein L11 methyltransferase (308 aa).

Positions 157, 178, 200, and 243 each coordinate S-adenosyl-L-methionine.

The protein belongs to the methyltransferase superfamily. PrmA family.

The protein resides in the cytoplasm. It carries out the reaction L-lysyl-[protein] + 3 S-adenosyl-L-methionine = N(6),N(6),N(6)-trimethyl-L-lysyl-[protein] + 3 S-adenosyl-L-homocysteine + 3 H(+). In terms of biological role, methylates ribosomal protein L11. The polypeptide is Ribosomal protein L11 methyltransferase (Pelotomaculum thermopropionicum (strain DSM 13744 / JCM 10971 / SI)).